A 185-amino-acid chain; its full sequence is Elongation factor P (185 aa).

It belongs to the elongation factor P family.

It is found in the cytoplasm. It participates in protein biosynthesis; polypeptide chain elongation. Its function is as follows. Involved in peptide bond synthesis. Stimulates efficient translation and peptide-bond synthesis on native or reconstituted 70S ribosomes in vitro. Probably functions indirectly by altering the affinity of the ribosome for aminoacyl-tRNA, thus increasing their reactivity as acceptors for peptidyl transferase. The polypeptide is Elongation factor P (Petrotoga mobilis (strain DSM 10674 / SJ95)).